The primary structure comprises 228 residues: Geranylgeranylglyceryl phosphate synthase (228 aa).

Lys14 contributes to the sn-glycerol 1-phosphate binding site. Residues Asp16 and Thr42 each contribute to the Mg(2+) site. Residues Tyr160 to Gly165, Gly190, and Gly210 to Asn211 each bind sn-glycerol 1-phosphate.

The protein belongs to the GGGP/HepGP synthase family. Group I subfamily. Requires Mg(2+) as cofactor.

It is found in the cytoplasm. It catalyses the reaction sn-glycerol 1-phosphate + (2E,6E,10E)-geranylgeranyl diphosphate = sn-3-O-(geranylgeranyl)glycerol 1-phosphate + diphosphate. The protein operates within membrane lipid metabolism; glycerophospholipid metabolism. Its function is as follows. Prenyltransferase that catalyzes the transfer of the geranylgeranyl moiety of geranylgeranyl diphosphate (GGPP) to the C3 hydroxyl of sn-glycerol-1-phosphate (G1P). This reaction is the first ether-bond-formation step in the biosynthesis of archaeal membrane lipids. In Methanocella arvoryzae (strain DSM 22066 / NBRC 105507 / MRE50), this protein is Geranylgeranylglyceryl phosphate synthase.